A 552-amino-acid chain; its full sequence is Membrane protein insertase YidC (552 aa).

The next 5 membrane-spanning stretches (helical) occupy residues 7–24 (VLWV…DNWQ), 364–384 (WGWA…PLSA), 434–454 (LPVV…LASV), 473–493 (PFFI…SLNP), and 508–528 (PIAF…YYVV).

Belongs to the OXA1/ALB3/YidC family. Type 1 subfamily. Interacts with the Sec translocase complex via SecD. Specifically interacts with transmembrane segments of nascent integral membrane proteins during membrane integration.

Its subcellular location is the cell inner membrane. Its function is as follows. Required for the insertion and/or proper folding and/or complex formation of integral membrane proteins into the membrane. Involved in integration of membrane proteins that insert both dependently and independently of the Sec translocase complex, as well as at least some lipoproteins. Aids folding of multispanning membrane proteins. This is Membrane protein insertase YidC from Burkholderia cenocepacia (strain ATCC BAA-245 / DSM 16553 / LMG 16656 / NCTC 13227 / J2315 / CF5610) (Burkholderia cepacia (strain J2315)).